The primary structure comprises 217 residues: UPF0193 protein EVG1 (217 aa).

The protein belongs to the UPF0193 (EVG1) family.

This Homo sapiens (Human) protein is UPF0193 protein EVG1 (C22orf23).